The chain runs to 541 residues: Chaperonin GroEL (541 aa).

ATP-binding positions include 29–32, 86–90, glycine 413, 478–480, and aspartate 494; these read TLGP, DGTTT, and NAL.

This sequence belongs to the chaperonin (HSP60) family. Forms a cylinder of 14 subunits composed of two heptameric rings stacked back-to-back. Interacts with the co-chaperonin GroES.

The protein resides in the cytoplasm. The catalysed reaction is ATP + H2O + a folded polypeptide = ADP + phosphate + an unfolded polypeptide.. Together with its co-chaperonin GroES, plays an essential role in assisting protein folding. The GroEL-GroES system forms a nano-cage that allows encapsulation of the non-native substrate proteins and provides a physical environment optimized to promote and accelerate protein folding. The sequence is that of Chaperonin GroEL from Lachnoclostridium phytofermentans (strain ATCC 700394 / DSM 18823 / ISDg) (Clostridium phytofermentans).